The sequence spans 355 residues: NADH dehydrogenase [ubiquinone] 1 alpha subcomplex subunit 10, mitochondrial (355 aa).

A mitochondrion-targeting transit peptide spans 1 to 35 (MALRLLRLVPASAPARGLAAGAQRVGRIHTSVHCK). The residue at position 122 (K122) is an N6-acetyllysine; alternate. K122 carries the N6-succinyllysine; alternate modification. Residue S250 is modified to Phosphoserine; by PINK1. Position 285 is an N6-succinyllysine (K285).

The protein belongs to the complex I NDUFA10 subunit family. In terms of assembly, complex I is composed of 45 different subunits. This a component of the hydrophobic protein fraction. FAD serves as cofactor. Phosphorylation at Ser-250 by PINK1 is required for the binding and/or reduction of the complex I substrate ubiquinone. Post-translationally, acetylation of Lys-242 is observed in liver mitochondria from fasted mice but not from fed mice.

It is found in the mitochondrion matrix. Its function is as follows. Accessory subunit of the mitochondrial membrane respiratory chain NADH dehydrogenase (Complex I), that is believed not to be involved in catalysis. Complex I functions in the transfer of electrons from NADH to the respiratory chain. The immediate electron acceptor for the enzyme is believed to be ubiquinone. The chain is NADH dehydrogenase [ubiquinone] 1 alpha subcomplex subunit 10, mitochondrial (Ndufa10) from Mus musculus (Mouse).